A 411-amino-acid polypeptide reads, in one-letter code: MKGALGSPVAAAGAAMQETFGCVVANRFHQLLDDESDPFDILREAEHRRQQQLQRKRRDEAAAASGAGHRGGRSPAVASGHRPGAGGRRESQKERKSLAASGAQQPDSPGGPQPPGQKRTPRRGEQQGWNDNRGTDVVLERAERRSYREYRPYETERQADLPVEKFTDEKPVDRFDRDRPLRGRGGPRGGLRSRGRGGPGNRAFDSFDQRGKRDFERYSSNDKTNRMEDSMGGCGIRPWGSGKDTSDTEPPAPMEETSMMEECQGTLDEESAAKVPELEVEEENQVQEMTLDEWKNLQEQTRPKPEFNIRKPESTVPSKAVVIHKSRYRDDMVKEDYEDESHVFRKAANDITSQLEINFGNLPRPGRGARGSTRGGRGRMRRTENYGPRAEVVTQDVAPNPDDPEDFPALA.

Phosphoserine occurs at positions 7 and 36. The stretch at 42 to 62 (LREAEHRRQQQLQRKRRDEAA) forms a coiled coil. Residues 42–271 (LREAEHRRQQ…ECQGTLDEES (230 aa)) form a disordered region. Arginine 70 is subject to Omega-N-methylarginine. Serine 74 is modified (phosphoserine). Basic and acidic residues predominate over residues 87–97 (GRRESQKERKS). Position 108 is a phosphoserine (serine 108). 2 stretches are compositionally biased toward basic and acidic residues: residues 138 to 181 (VLER…DRPL) and 205 to 229 (DSFDQRGKRDFERYSSNDKTNRMED). Residues lysine 212 and lysine 274 each participate in a glycyl lysine isopeptide (Lys-Gly) (interchain with G-Cter in SUMO1); alternate cross-link. Glycyl lysine isopeptide (Lys-Gly) (interchain with G-Cter in SUMO2); alternate cross-links involve residues lysine 212 and lysine 274. Positions 279–301 (EVEEENQVQEMTLDEWKNLQEQT) form a coiled coil. Residues 296–313 (NLQEQTRPKPEFNIRKPE) show a composition bias toward basic and acidic residues. The segment at 296–318 (NLQEQTRPKPEFNIRKPESTVPS) is disordered. Lysine 334 participates in a covalent cross-link: Glycyl lysine isopeptide (Lys-Gly) (interchain with G-Cter in SUMO1); alternate. Residue lysine 334 forms a Glycyl lysine isopeptide (Lys-Gly) (interchain with G-Cter in SUMO2); alternate linkage. 2 positions are modified to phosphothreonine; by PKC: threonine 352 and threonine 373. A disordered region spans residues 358-411 (NFGNLPRPGRGARGSTRGGRGRMRRTENYGPRAEVVTQDVAPNPDDPEDFPALA). Acidic residues predominate over residues 402–411 (DDPEDFPALA).

Belongs to the SERBP1-HABP4 family. As to quaternary structure, associates with ribosomes; promoting ribosome stabilization. Interacts with EEF2/eEF2; promoting ribosome stabilization. Interacts with FMR1. Interacts with FXR1 and FXR2. Interacts with CHD3 (via C-terminus). Interacts (via C-terminus) with RACK1. Interacts with p53/TP53. Interacts (via N-terminus) with SRSF9; this interaction is direct. Interacts with SYNCRIP; this interaction is direct. Interacts with MEF2C (via N-terminus); this interaction decreases DNA-binding activity of MEF2C in myocardial cells in response to mechanical stress. Interacts with PRMT1 (via N-terminus). Interacts with SPIN1. Phosphorylated by phorbol 12-myristate 13-acetate (PMA)-activated PKC isoforms at Thr-352 and Thr-373. Post-translationally, methylated. Methylation is decreased by phorbol 12-myristate 13-acetate (PMA)-activated PKC, in vitro. In terms of tissue distribution, expressed in adult heart, brain, liver, kidney, testis, and in various embryonic tissues, but not in adult spleen, lung or skeletal muscle.

It is found in the nucleus. Its subcellular location is the cytoplasm. The protein resides in the stress granule. The protein localises to the sarcoplasm. It localises to the nuclear body. It is found in the nucleolus. Its subcellular location is the nucleus speckle. The protein resides in the cajal body. The protein localises to the gem. Ribosome-binding protein that promotes ribosome hibernation, a process during which ribosomes are stabilized in an inactive state and preserved from proteasomal degradation. Acts via its association with EEF2/eEF2 factor at the A-site of the ribosome, promoting ribosome stabilization in an inactive state compatible with storage. Plays a key role in ribosome hibernation in the mature oocyte by promoting ribosome stabilization. Ribosomes, which are produced in large quantities during oogenesis, are stored and translationally repressed in the oocyte and early embryo. Also binds RNA, regulating transcription and pre-mRNA splicing. Binds (via C-terminus) to poly(U) RNA. Seems to play a role in PML-nuclear bodies formation. Negatively regulates DNA-binding activity of the transcription factor MEF2C in myocardial cells in response to mechanical stress. The polypeptide is Intracellular hyaluronan-binding protein 4 (Mus musculus (Mouse)).